The chain runs to 120 residues: Large ribosomal subunit protein uL18 (120 aa).

The tract at residues 1 to 26 (MSKAKVTNARRKRSVRLKLRRSGGGR) is disordered. Positions 8–23 (NARRKRSVRLKLRRSG) are enriched in basic residues.

This sequence belongs to the universal ribosomal protein uL18 family. In terms of assembly, part of the 50S ribosomal subunit; part of the 5S rRNA/L5/L18/L25 subcomplex. Contacts the 5S and 23S rRNAs.

Its function is as follows. This is one of the proteins that bind and probably mediate the attachment of the 5S RNA into the large ribosomal subunit, where it forms part of the central protuberance. The protein is Large ribosomal subunit protein uL18 of Bradyrhizobium diazoefficiens (strain JCM 10833 / BCRC 13528 / IAM 13628 / NBRC 14792 / USDA 110).